The sequence spans 259 residues: Bisphosphoglycerate mutase (259 aa).

An N-acetylserine modification is found at serine 2. Substrate contacts are provided by residues 10–17, 23–24, arginine 62, 89–92, arginine 100, and 116–117; these read RHGEGAWN, CS, ERHY, and RR. Histidine 11 serves as the catalytic Tele-phosphohistidine intermediate. Glutamate 89 functions as the Proton donor/acceptor in the catalytic mechanism. Threonine 122 carries the phosphothreonine modification. 189–190 is a substrate binding site; that stretch reads GN.

The protein belongs to the phosphoglycerate mutase family. BPG-dependent PGAM subfamily. Homodimer. In terms of tissue distribution, expressed in red blood cells.

The enzyme catalyses (2R)-3-phospho-glyceroyl phosphate = (2R)-2,3-bisphosphoglycerate + H(+). It catalyses the reaction (2R)-2-phosphoglycerate = (2R)-3-phosphoglycerate. Its activity is regulated as follows. At alkaline pH BPGM favors the synthase reaction; however, at lower pH the phosphatase reaction is dominant. Inhibited by citrate. Functionally, plays a major role in regulating hemoglobin oxygen affinity by controlling the levels of its allosteric effector 2,3-bisphosphoglycerate (2,3-BPG). Also exhibits mutase (EC 5.4.2.11) activity. This Oryctolagus cuniculus (Rabbit) protein is Bisphosphoglycerate mutase (BPGM).